We begin with the raw amino-acid sequence, 346 residues long: Phosphoribosylformylglycinamidine cyclo-ligase (346 aa).

It belongs to the AIR synthase family.

The protein localises to the cytoplasm. The enzyme catalyses 2-formamido-N(1)-(5-O-phospho-beta-D-ribosyl)acetamidine + ATP = 5-amino-1-(5-phospho-beta-D-ribosyl)imidazole + ADP + phosphate + H(+). The protein operates within purine metabolism; IMP biosynthesis via de novo pathway; 5-amino-1-(5-phospho-D-ribosyl)imidazole from N(2)-formyl-N(1)-(5-phospho-D-ribosyl)glycinamide: step 2/2. The chain is Phosphoribosylformylglycinamidine cyclo-ligase from Bacillus licheniformis (strain ATCC 14580 / DSM 13 / JCM 2505 / CCUG 7422 / NBRC 12200 / NCIMB 9375 / NCTC 10341 / NRRL NRS-1264 / Gibson 46).